The following is a 370-amino-acid chain: 1-propanol dehydrogenase PduQ (370 aa).

The protein belongs to the iron-containing alcohol dehydrogenase family. As to quaternary structure, interacts with PduP, probably via the N-terminus of PduQ. Fe cation is required as a cofactor.

It localises to the bacterial microcompartment. It carries out the reaction 1-propanol + NAD(+) = propanal + NADH + H(+). It functions in the pathway polyol metabolism; 1,2-propanediol degradation. With respect to regulation, enzyme is oxygen sensitive. Its function is as follows. An iron-dependent alcohol dehydrogenase required for optimal 1,2-propanediol (1,2-PD) degradation. NAD(+) and NADH are regenerated internally within the bacterial microcompartment (BMC) dedicated to 1,2-PD degradation by the PduP and PduQ enzymes, which reduce NAD(+) and oxidize NADH respectively, although there must also be cofactor transport across the BMC. In terms of biological role, the 1,2-PD-specific bacterial microcompartment (BMC) concentrates low levels of 1,2-PD catabolic enzymes, concentrates volatile reaction intermediates thus enhancing pathway flux and keeps the level of toxic, mutagenic propionaldehyde low. The protein is 1-propanol dehydrogenase PduQ of Salmonella typhimurium (strain LT2 / SGSC1412 / ATCC 700720).